The sequence spans 506 residues: Maturase K (506 aa).

It belongs to the intron maturase 2 family. MatK subfamily.

The protein localises to the plastid. It is found in the chloroplast. Functionally, usually encoded in the trnK tRNA gene intron. Probably assists in splicing its own and other chloroplast group II introns. This Erica tetralix (Cross-leaved heath) protein is Maturase K.